A 131-amino-acid polypeptide reads, in one-letter code: Interleukin-13 (131 aa).

A signal peptide spans 1–18 (MALWVTAVLALACLGGLA). N42, N53, N76, and N121 each carry an N-linked (GlcNAc...) asparagine glycan. Intrachain disulfides connect C52–C80 and C68–C94.

It belongs to the IL-4/IL-13 family. As to quaternary structure, interacts with IL13RA2.

The protein resides in the secreted. Functionally, cytokine that plays important roles in allergic inflammation and immune response to parasite infection. Synergizes with IL2 in regulating interferon-gamma synthesis. Stimulates B-cell proliferation, and activation of eosinophils, basophils, and mast cells. Plays an important role in controlling IL33 activity by modulating the production of transmembrane and soluble forms of interleukin-1 receptor-like 1/IL1RL1. Displays the capacity to antagonize Th1-driven proinflammatory immune response and downregulates synthesis of many proinflammatory cytokines including IL1, IL6, IL10, IL12 and TNF-alpha through a mechanism that partially involves suppression of NF-kappa-B. Also functions on nonhematopoietic cells, including endothelial cells where it induces vascular cell adhesion protein 1/VCAM1, which is important in the recruitment of eosinophils. Exerts its biological effects through its receptors which comprises the IL4R chain and the IL13RA1 chain, to activate JAK1 and TYK2, leading to the activation of STAT6. Aside from IL13RA1, another receptor IL13RA2 acts as a high affinity decoy for IL13 and mediates internalization and depletion of extracellular IL13. The chain is Interleukin-13 (Il13) from Rattus norvegicus (Rat).